The primary structure comprises 88 residues: DNA-directed RNA polymerase subunit omega (88 aa).

This sequence belongs to the RNA polymerase subunit omega family. As to quaternary structure, the RNAP catalytic core consists of 2 alpha, 1 beta, 1 beta' and 1 omega subunit. When a sigma factor is associated with the core the holoenzyme is formed, which can initiate transcription.

It carries out the reaction RNA(n) + a ribonucleoside 5'-triphosphate = RNA(n+1) + diphosphate. In terms of biological role, promotes RNA polymerase assembly. Latches the N- and C-terminal regions of the beta' subunit thereby facilitating its interaction with the beta and alpha subunits. The sequence is that of DNA-directed RNA polymerase subunit omega from Haemophilus influenzae (strain 86-028NP).